Reading from the N-terminus, the 338-residue chain is Penicillin V acylase (338 aa).

Residues 1-3 (MLG) constitute a propeptide, removed in mature form. The Nucleophile role is filled by Cys4.

This sequence belongs to the peptidase C59 family. In terms of assembly, homotetramer. In terms of processing, expressed as an inactive precursor that is cleaved autocatalytically at Gly-3/Cys-4 to generate an active enzyme. Processing exposes a catalytic N-terminal nucleophile residue with a free alpha amino group.

It carries out the reaction a penicillin + H2O = 6-aminopenicillanate + a carboxylate. Its activity is regulated as follows. Hydrolase activity is rapidly inhibited by lysine modifying reagents. Catalyzes the hydrolysis of penicillin V to 6-aminopenicillanate (6-APA). Exhibits high specificity for penicillin V. Penicillin G and other related compounds are hydrolyzed at less than 10% of the rate of penicillin V. Among the cephalosporins, cephalosporin C is resistant to cleavage, whereas cephalosporin G is cleaved at about 1% of the rate of cleavage of penicillin V. The chain is Penicillin V acylase from Lysinibacillus sphaericus (Bacillus sphaericus).